Reading from the N-terminus, the 156-residue chain is Small ribosomal subunit protein uS7 (156 aa).

Belongs to the universal ribosomal protein uS7 family. As to quaternary structure, part of the 30S ribosomal subunit. Contacts proteins S9 and S11.

Its function is as follows. One of the primary rRNA binding proteins, it binds directly to 16S rRNA where it nucleates assembly of the head domain of the 30S subunit. Is located at the subunit interface close to the decoding center, probably blocks exit of the E-site tRNA. This Shewanella halifaxensis (strain HAW-EB4) protein is Small ribosomal subunit protein uS7.